A 347-amino-acid chain; its full sequence is NADH-ubiquinone oxidoreductase chain 2 (347 aa).

9 helical membrane-spanning segments follow: residues 3 to 23 (PMTF…VMMS), 59 to 79 (YFLT…INLL), 89 to 109 (LINP…LGLA), 150 to 170 (NLNI…WGGL), 178 to 198 (IMAY…MYNP), 201 to 221 (MLLN…LLMI), 237 to 257 (LPLI…LPPL), 276 to 296 (IILS…YTRI), and 326 to 346 (LPLM…TAIL).

Belongs to the complex I subunit 2 family. As to quaternary structure, core subunit of respiratory chain NADH dehydrogenase (Complex I) which is composed of 45 different subunits. Interacts with TMEM242.

It is found in the mitochondrion inner membrane. It catalyses the reaction a ubiquinone + NADH + 5 H(+)(in) = a ubiquinol + NAD(+) + 4 H(+)(out). Its function is as follows. Core subunit of the mitochondrial membrane respiratory chain NADH dehydrogenase (Complex I) which catalyzes electron transfer from NADH through the respiratory chain, using ubiquinone as an electron acceptor. Essential for the catalytic activity and assembly of complex I. This chain is NADH-ubiquinone oxidoreductase chain 2, found in Nyctophilus arnhemensis (Northern long-eared bat).